A 68-amino-acid chain; its full sequence is Purkinje cell protein 4-like protein 1 (68 aa).

Residues 1 to 16 show a composition bias toward polar residues; the sequence is MSELNTKTSPATNQAA. The interval 1–45 is disordered; the sequence is MSELNTKTSPATNQAAGQEEKGKAGNVKKAEEEEEIDIDLTAPET. Thr-8 is subject to Phosphothreonine. Positions 18–31 are enriched in basic and acidic residues; the sequence is QEEKGKAGNVKKAE. An IQ domain is found at 45-68; that stretch reads TEKAALAIQGKFRRFQKRKKDPSS.

Belongs to the PCP4 family.

The polypeptide is Purkinje cell protein 4-like protein 1 (PCP4L1) (Homo sapiens (Human)).